The chain runs to 452 residues: GPI mannosyltransferase 2 (452 aa).

Over 1–7 (MMEKVTK) the chain is Cytoplasmic. Residues 8–28 (LALTSRVMVLVVQLLANFATP) form a helical membrane-spanning segment. The Lumenal segment spans residues 29-113 (DHKPDVFRMP…HLGIPLSRDA (85 aa)). The chain crosses the membrane as a helical span at residues 114-134 (LILLVAVALNVLIFCKTANVL). Topologically, residues 135-161 (YKLTQRMFNDHNKSWNAALIFCFNPAS) are cytoplasmic. Residues 162–182 (IFFSAAYSETFFAFASFSLML) form a helical membrane-spanning segment. Residues 183-209 (ECMRSEKDFRTFRLGAALTGCFVCRSN) lie on the Lumenal side of the membrane. A helical transmembrane segment spans residues 210–230 (GLLTLGFPLYFLARHILLSTG). Residues 231 to 238 (SVQRCWQL) are Cytoplasmic-facing. A helical membrane pass occupies residues 239–259 (FKMGLAMLVALGILHTYYFYI). Over 260–284 (YRLYCLPDVKVQHAQHVVDYAKERS) the chain is Lumenal. The helical transmembrane segment at 285–305 (FLISGQASVGSPWCGYTLPFP) threads the bilayer. Over 306 to 327 (YTYVQSHYWDVGFLRYYKWKQL) the chain is Cytoplasmic. The helical transmembrane segment at 328–348 (PNFLLALPMLLFMHWHCYDYI) threads the bilayer. The Lumenal portion of the chain corresponds to 349–370 (RKLVANTWSKISPSEYQGILKE). A helical membrane pass occupies residues 371-391 (HISFPFVLHAAVLTLVCTLYV). At 392-398 (HIQVSTR) the chain is on the cytoplasmic side. Residues 399–419 (LLASATPVFYWFAADYMPNTF) traverse the membrane as a helical segment. The Lumenal segment spans residues 420 to 426 (QLSFRSK). Residues 427-447 (AGVLFIWCLTYSLVGTVLFSN) traverse the membrane as a helical segment. At 448-452 (NYPWT) the chain is on the cytoplasmic side.

Belongs to the PIGV family.

The protein resides in the endoplasmic reticulum membrane. Its pathway is glycolipid biosynthesis; glycosylphosphatidylinositol-anchor biosynthesis. Functionally, mannosyltransferase involved in glycosylphosphatidylinositol-anchor biosynthesis. Transfers the second mannose to the glycosylphosphatidylinositol during GPI precursor assembly. Required for the GPI-mediated endoplasmic reticulum exit and proper targeting to the cell surface of chp. Required for GPI-mediated membrane attachment of chp, qsm and Cont. Essential for microvillar stability in the rhabdomere. This is GPI mannosyltransferase 2 from Drosophila pseudoobscura pseudoobscura (Fruit fly).